A 1529-amino-acid chain; its full sequence is MSSQVISASRLYQIVASPTSDNDAKSRSINELKTHVKKDFVDIKQVPKYVEALSIAVDISDTGISTSSFSVLSHLVKRVSMQDSSGEVLKSQSYLVLPIIINRLGDIKASARISAKKALEAYWFSAPKEVEDSIIDIAFSHKNSKVINESIIWLDHIITNVNPHFKINLFLPHIVKLLRLNSDSDEVLIENIKTLFKDYYSLKHNRLYKFDLSKEFDTQKIPSNVHESIISQIGTSSSILMKQATPDIGLDHNFISAGTTRVTVNSMGRDKGTISSNSSTPASLSSSTMSRPKSRTNFHNYTKSISPSQEDEQITKPSVHNSAFNKYNTNQMSAPAKPVAMVNENSNEINSEISPEIEKIIAKTFTYKIDSSILPLDVKDVDDLCGTINELLPIFEGKETEFNWGMREKNIIKLRSIIRGNSSRLFTNELTSYLKESSESICKAVTSLRTTLSSHGCHFLKECAIILKEHFDPLVDSYVPHLMKLCSATKHIASSNANMALCAIFINVPYNYRLLHKILVSANEKNVQPRSYSGIWLQVVLVRFHDTSSFSYRGSNSISGLDTSIKILTKLLADPNPNVRQVAKDTYWCFWDKFPSEAESLLTRLDTNVVKAIERSKPRTITSRNQPSTLSSLTARKARPSIKESIIARNKELRKQKDQTSISRPSSRINSTSSPCPPDNDYLQKHDKPQFSTLDSGKFSRLGVAKRTPSTSSLSRVESNQDAITRKVSDSVSSNAKKHNDSQGINADAQIQNIETMKSTYSVDDNSSNRTNMEQTNKFESFDKQSDPILKFLSSNQKEFITEGINLLKYAIMGEEDLSSEVNGLLKKISVRNQDLLKPLFLSTDNLFKKTYQFFSFEDFFRVCCILIHTIDTRLVDLIVSIAGVDDIYESAIKLISYTTNLGNIIDDSDLTMQIIRFKSIIVRSIIEFLNQGLDKIPISDSYFSKLVTNLFELVSLVKSTGLYKSFCELLIKLYSINPTLFTSELQMIATSTREEVEYVVGIDDVLDLNRGHAINFTTQYELTRVVPGNNLRKMSPLKAPSDLTMVVPVEKELFEDDNIDIDSKIQSESANDTGFRTPPKLAGNHTSPIHSERSTIIETDGNISDNVEEYVNDAMDVDQNPSEEIVNGLKNDIEMHNDDNKVKEKTSNDMSDSLPLIDESDNIFVEIDSDSASRKPDLFTKFAQHDNSSELVENFAQVKITELSKQRLRNNDPIKKFIDKVDPLNKISLKNKPISIYEDVNFKGSPQKVKDYSYTELNWFNFQLAKLAMDKEDNQEIDYCIEDFKSLCDNLSSKKIEGKEFVSVLNYLQNIQISNAEFSRYFQSSGHSLIENSLWNFFDNHINLPVSKKLSGLILLKQLLINRLRVSLDRLWNLLVGLSSESSSSVDELSLAISEAFDEMLAGLFSSEIIFARILTTLENAVLERESFSLPFILECLSKVLSTNAVSLLIDEKLIMRIDNVLSGFMNDEEVEIRRCVISSYGKLLKASRISSSIETNEDIRSEYSVMDDILKKLSIPQKKLIEYYSQS.

4 disordered regions span residues 266–314 (SMGR…DEQI), 617–638 (KPRTITSRNQPSTLSSLTARKA), 651–745 (KELR…SQGI), and 1070–1090 (SANDTGFRTPPKLAGNHTSPI). Low complexity predominate over residues 273-290 (TISSNSSTPASLSSSTMS). Composition is skewed to polar residues over residues 295 to 308 (RTNFHNYTKSISPS) and 619 to 634 (RTITSRNQPSTLSSLT). A compositionally biased stretch (low complexity) spans 660-674 (TSISRPSSRINSTSS). The span at 708–723 (TPSTSSLSRVESNQDA) shows a compositional bias: polar residues.

It belongs to the CLASP family. As to quaternary structure, interacts with microtubules.

Its subcellular location is the cytoplasm. It is found in the cytoskeleton. The protein localises to the nucleus. It localises to the spindle. Microtubule binding protein that promotes the stabilization of dynamic microtubules. Required for mitotic spindle formation. This is Protein STU1 (STU1) from Debaryomyces hansenii (strain ATCC 36239 / CBS 767 / BCRC 21394 / JCM 1990 / NBRC 0083 / IGC 2968) (Yeast).